A 128-amino-acid chain; its full sequence is Gastrotropin (128 aa).

Position 2 is an N-acetylalanine (A2).

Belongs to the calycin superfamily. Fatty-acid binding protein (FABP) family. In terms of tissue distribution, found exclusively in the ileum and to a lesser extent in distal jejunum.

It is found in the cytoplasm. The protein resides in the membrane. Functionally, binds to bile acids and is involved in enterohepatic bile acid metabolism. Required for efficient apical to basolateral transport of conjugated bile acids in ileal enterocytes. Stimulates gastric acid and pepsinogen secretion. This is Gastrotropin (FABP6) from Sus scrofa (Pig).